Reading from the N-terminus, the 747-residue chain is Endoglucanase C (747 aa).

Residues 1–37 form the signal peptide; it reads MGHVTSPSKRYPASFKRAGSILGVSIALAAFSNVAAA. In terms of domain architecture, CBM2 spans 38-136; the sequence is GCEYVVTNSW…TVNGAACTGG (99 aa). 3 disulfide bridges follow: cysteine 39–cysteine 133, cysteine 183–cysteine 214, and cysteine 193–cysteine 208. The CBM10 domain occupies 182-211; that stretch reads QCNWYGTLYPLCVSTTSGWGYENNRSCISP. The segment at 226-283 is disordered; the sequence is GSSSPSSISSSSVRSSSSSSVVPPSSSSSSSVPSSSSSSVSSSSVVSSSSSSVSVPGT. A compositionally biased stretch (low complexity) spans 227–281; sequence SSSPSSISSSSVRSSSSSSVVPPSSSSSSSVPSSSSSSVSSSSVVSSSSSSVSVP. The catalytic stretch occupies residues 280 to 747; that stretch reads VPGTGVFRVN…TQLLHNMWGL (468 aa). Residue glutamate 502 is the Proton donor of the active site. Residue glutamate 652 is the Nucleophile of the active site.

This sequence belongs to the glycosyl hydrolase 5 (cellulase A) family.

The enzyme catalyses Endohydrolysis of (1-&gt;4)-beta-D-glucosidic linkages in cellulose, lichenin and cereal beta-D-glucans.. The polypeptide is Endoglucanase C (celC) (Cellvibrio japonicus (strain Ueda107) (Pseudomonas fluorescens subsp. cellulosa)).